The following is a 174-amino-acid chain: Bifunctional protein PyrR 2 (174 aa).

Substrate-binding positions include 39–40 (TR), 100–108 (DDVLFTGRT), and Arg133. The short motif at 96 to 108 (VILVDDVLFTGRT) is the PRPP-binding element.

The protein belongs to the purine/pyrimidine phosphoribosyltransferase family. PyrR subfamily. Homodimer and homohexamer; in equilibrium.

The enzyme catalyses UMP + diphosphate = 5-phospho-alpha-D-ribose 1-diphosphate + uracil. Regulates transcriptional attenuation of the pyrimidine nucleotide (pyr) operon by binding in a uridine-dependent manner to specific sites on pyr mRNA. This disrupts an antiterminator hairpin in the RNA and favors formation of a downstream transcription terminator, leading to a reduced expression of downstream genes. In terms of biological role, also displays a weak uracil phosphoribosyltransferase activity which is not physiologically significant. This is Bifunctional protein PyrR 2 (pyrR2) from Lactiplantibacillus plantarum (strain ATCC BAA-793 / NCIMB 8826 / WCFS1) (Lactobacillus plantarum).